The chain runs to 244 residues: UDP-2,3-diacylglucosamine hydrolase (244 aa).

Positions 8, 10, 41, 79, and 114 each coordinate Mn(2+). Position 79–80 (79–80 (NR)) interacts with substrate. 5 residues coordinate substrate: D122, S160, N164, K167, and H195. Mn(2+) contacts are provided by H195 and H197.

The protein belongs to the LpxH family. Requires Mn(2+) as cofactor.

It localises to the cell inner membrane. It carries out the reaction UDP-2-N,3-O-bis[(3R)-3-hydroxytetradecanoyl]-alpha-D-glucosamine + H2O = 2-N,3-O-bis[(3R)-3-hydroxytetradecanoyl]-alpha-D-glucosaminyl 1-phosphate + UMP + 2 H(+). It participates in glycolipid biosynthesis; lipid IV(A) biosynthesis; lipid IV(A) from (3R)-3-hydroxytetradecanoyl-[acyl-carrier-protein] and UDP-N-acetyl-alpha-D-glucosamine: step 4/6. Functionally, hydrolyzes the pyrophosphate bond of UDP-2,3-diacylglucosamine to yield 2,3-diacylglucosamine 1-phosphate (lipid X) and UMP by catalyzing the attack of water at the alpha-P atom. Involved in the biosynthesis of lipid A, a phosphorylated glycolipid that anchors the lipopolysaccharide to the outer membrane of the cell. The polypeptide is UDP-2,3-diacylglucosamine hydrolase (Marinobacter nauticus (strain ATCC 700491 / DSM 11845 / VT8) (Marinobacter aquaeolei)).